The chain runs to 403 residues: Glucose-signaling factor 2 (403 aa).

At 1 to 177 (MEIYIRLNAD…QEVQANYSSL (177 aa)) the chain is on the lumenal side. 2 N-linked (GlcNAc...) asparagine glycosylation sites follow: Asn89 and Asn173. A helical; Signal-anchor for type II membrane protein membrane pass occupies residues 178 to 198 (VAQWLFFVMHIFKVGIITLFL). The Cytoplasmic segment spans residues 199 to 403 (KLGIANPISF…IKKNDLKKSN (205 aa)). Residues 330–388 (ELENNLKKILEEYDGDIGKMNAEIRRFRRFGIYEPDEKLASLVKLRREIADEKEKASNN) are a coiled coil.

Its subcellular location is the endoplasmic reticulum membrane. Functionally, may be involved in the secretion of hexose transporters from the endoplasmic reticulum. Involved in secretion of GAL2 and HXT1. The protein is Glucose-signaling factor 2 (GSF2) of Saccharomyces cerevisiae (strain ATCC 204508 / S288c) (Baker's yeast).